A 117-amino-acid polypeptide reads, in one-letter code: UPF0122 protein Teth514_1714 (117 aa).

The protein belongs to the UPF0122 family.

Might take part in the signal recognition particle (SRP) pathway. This is inferred from the conservation of its genetic proximity to ftsY/ffh. May be a regulatory protein. This is UPF0122 protein Teth514_1714 from Thermoanaerobacter sp. (strain X514).